A 63-amino-acid chain; its full sequence is MSKKCEICGKGVVFGVQYSHSHRQSKRTWSPNIRKIKAIVKGTPRTIHVCARCLRSGKVQRAI.

This sequence belongs to the bacterial ribosomal protein bL28 family.

The sequence is that of Large ribosomal subunit protein bL28 from Clostridium kluyveri (strain NBRC 12016).